The following is a 213-amino-acid chain: Uridine kinase (213 aa).

Residue 14-21 (GASASGKS) participates in ATP binding.

This sequence belongs to the uridine kinase family.

Its subcellular location is the cytoplasm. The catalysed reaction is uridine + ATP = UMP + ADP + H(+). It carries out the reaction cytidine + ATP = CMP + ADP + H(+). Its pathway is pyrimidine metabolism; CTP biosynthesis via salvage pathway; CTP from cytidine: step 1/3. It functions in the pathway pyrimidine metabolism; UMP biosynthesis via salvage pathway; UMP from uridine: step 1/1. The sequence is that of Uridine kinase from Vibrio cholerae serotype O1 (strain ATCC 39315 / El Tor Inaba N16961).